A 159-amino-acid chain; its full sequence is Phosphopantetheine adenylyltransferase (159 aa).

Position 9 (Thr9) interacts with substrate. ATP is bound by residues 9-10 (TF) and His17. The substrate site is built by Lys41, Leu73, and Arg87. Residues 88–90 (GLR), Glu98, and 123–129 (YSFISST) contribute to the ATP site.

Belongs to the bacterial CoaD family. Homohexamer. Requires Mg(2+) as cofactor.

It is found in the cytoplasm. It carries out the reaction (R)-4'-phosphopantetheine + ATP + H(+) = 3'-dephospho-CoA + diphosphate. It participates in cofactor biosynthesis; coenzyme A biosynthesis; CoA from (R)-pantothenate: step 4/5. In terms of biological role, reversibly transfers an adenylyl group from ATP to 4'-phosphopantetheine, yielding dephospho-CoA (dPCoA) and pyrophosphate. The polypeptide is Phosphopantetheine adenylyltransferase (Pseudomonas putida (strain GB-1)).